The primary structure comprises 347 residues: Putative ORC1-type DNA replication protein 1 (347 aa).

ATP contacts are provided by residues Thr-34–Val-38, Tyr-167, and Arg-179.

Belongs to the CDC6/cdc18 family.

Involved in regulation of DNA replication. Has no effect on MCM helicase activity, either stimulatory or inhibitory. Does not bind DNA. The sequence is that of Putative ORC1-type DNA replication protein 1 (cdc6-1) from Thermoplasma acidophilum (strain ATCC 25905 / DSM 1728 / JCM 9062 / NBRC 15155 / AMRC-C165).